The following is a 794-amino-acid chain: Protein SPA1-RELATED 4 (794 aa).

Residues 1-268 (MKGSSESSSR…MSELLQSEFI (268 aa)) form the Protein kinase domain. The tract at residues 126–165 (SCSDSGSDEDATTKSREIGSSRQEEILSERRSKQQEEVKK) is disordered. Basic and acidic residues predominate over residues 136 to 165 (ATTKSREIGSSRQEEILSERRSKQQEEVKK). A coiled-coil region spans residues 272–326 (RENLEEREAAMELRDRIEEQELLLEFLFLIQQRKQEAADKLQDTISLLSSDIDQV). Disordered regions lie at residues 352–373 (QGAE…EESK) and 428–447 (GRSS…INDS). Positions 358 to 369 (AAEEENDDNSID) are enriched in acidic residues. WD repeat units lie at residues 482–521 (NSSN…KDGR), 531–571 (ASRS…LVTE), 574–614 (EHEK…SIGT), 616–656 (KTKA…LPLC), 660–698 (GHHK…SGIN), 707–746 (GHTN…PVLS), and 762–794 (DASQ…LEMV). Positions 635–649 (AFGSADHKVYYYDLR) match the DWD box motif.

Interacts with COP1 and CO. Binds to CRY1 in response to blue light, this interaction prevents SPA1/COP1 complex formation and thus avoid COP1-dependent degradation of the transcription factor HY5 by the proteasome and promotes hypocotyl elongation.

The protein resides in the nucleus. In terms of biological role, repressor of photomorphogenesis in the light. Probably part of the COP1/SPA E3 ubiquitin-protein ligase complex. This is Protein SPA1-RELATED 4 (SPA4) from Arabidopsis thaliana (Mouse-ear cress).